Here is a 431-residue protein sequence, read N- to C-terminus: MAKIINVIGREIMDSRGNPTVEAEVHLEGGFVGMAAAPSGASTGSREALELRDGDKSRYLGKGVLTAVANVNDLIRTALLGKDATAQAELDQIMIDLDGTENKDKLGANAILAVSLAAAKAAAAFKGIPLYAHIAELNGTPGQYSMPVPMMNILNGGEHADNNVDIQEFMVQPVGAKTFREALRMGAEIFHTLKKVLHDKGLSTSVGDEGGFAPNLASNADALAIIKEAVELAGYKLGTDVTLALDCAASEFYKDGKYDLAGEGKVFDSNGFSDFLKSLADQYPIVSIEDGLDESDWDGWAYQTQIMGDKIQLVGDDLFVTNTKILTRGIENGIANSILIKFNQIGSLTETLAAIRMAKEAGYTAVISHRSGETEDSTIADLAVGTAAGQIKTGSLCRSDRVAKYNQLLRIEEQLGEKAPYRGLKEIKGQA.

Glutamine 167 contributes to the (2R)-2-phosphoglycerate binding site. Catalysis depends on glutamate 209, which acts as the Proton donor. 3 residues coordinate Mg(2+): aspartate 246, glutamate 289, and aspartate 316. (2R)-2-phosphoglycerate is bound by residues lysine 341, arginine 370, serine 371, and lysine 392. The active-site Proton acceptor is the lysine 341.

It belongs to the enolase family. As to quaternary structure, component of the RNA degradosome, a multiprotein complex involved in RNA processing and mRNA degradation. It depends on Mg(2+) as a cofactor.

The protein localises to the cytoplasm. It localises to the secreted. It is found in the cell surface. The enzyme catalyses (2R)-2-phosphoglycerate = phosphoenolpyruvate + H2O. The protein operates within carbohydrate degradation; glycolysis; pyruvate from D-glyceraldehyde 3-phosphate: step 4/5. Catalyzes the reversible conversion of 2-phosphoglycerate (2-PG) into phosphoenolpyruvate (PEP). It is essential for the degradation of carbohydrates via glycolysis. The protein is Enolase of Shewanella baltica (strain OS155 / ATCC BAA-1091).